Here is a 507-residue protein sequence, read N- to C-terminus: Rho GTPase-activating protein 19 (507 aa).

In terms of domain architecture, Rho-GAP spans 112-305 (APLTEEGIAQ…FMIKHSQKLF (194 aa)). Disordered regions lie at residues 344–371 (FLKHSKRSRLGSSPSSSTSLQEQTQQHT), 400–419 (KNTPRTPVSDTQVPNGKKHV), and 483–507 (DLQIRKEASSKSKKSHHKSTQETSI). Positions 355 to 369 (SSPSSSTSLQEQTQQ) are enriched in low complexity. Residues 400–413 (KNTPRTPVSDTQVP) are compositionally biased toward polar residues. The span at 483–492 (DLQIRKEASS) shows a compositional bias: basic and acidic residues.

Its function is as follows. GTPase activator for the Rho-type GTPases by converting them to an inactive GDP-bound state. The sequence is that of Rho GTPase-activating protein 19 (arhgap19) from Xenopus laevis (African clawed frog).